The sequence spans 285 residues: Eukaryotic translation initiation factor 3 subunit F-2 (285 aa).

An MPN domain is found at 11 to 145 (VFLKPLVLFQ…TRLYCAVEMG (135 aa)).

It belongs to the eIF-3 subunit F family. In terms of assembly, component of the eukaryotic translation initiation factor 3 (eIF-3) complex. The eIF-3 complex interacts with pix.

It is found in the cytoplasm. Its function is as follows. Component of the eukaryotic translation initiation factor 3 (eIF-3) complex, which is involved in protein synthesis of a specialized repertoire of mRNAs and, together with other initiation factors, stimulates binding of mRNA and methionyl-tRNAi to the 40S ribosome. The eIF-3 complex specifically targets and initiates translation of a subset of mRNAs involved in cell proliferation. The protein is Eukaryotic translation initiation factor 3 subunit F-2 of Drosophila sechellia (Fruit fly).